A 351-amino-acid chain; its full sequence is Molybdenum import ATP-binding protein ModC (351 aa).

Residues 1-229 (MLKINVKKQL…PLFLPWKLED (229 aa)) form the ABC transporter domain. 31–38 (GLSGSGKT) is a binding site for ATP. The Mop domain maps to 289–351 (KTSIRNILHG…FAQIKAVSVL (63 aa)).

It belongs to the ABC transporter superfamily. Molybdate importer (TC 3.A.1.8) family. In terms of assembly, the complex is composed of two ATP-binding proteins (ModC), two transmembrane proteins (ModB) and a solute-binding protein (ModA).

It is found in the cell inner membrane. It carries out the reaction molybdate(out) + ATP + H2O = molybdate(in) + ADP + phosphate + H(+). Functionally, part of the ABC transporter complex ModABC involved in molybdenum import. Responsible for energy coupling to the transport system. The sequence is that of Molybdenum import ATP-binding protein ModC from Pasteurella multocida (strain Pm70).